Reading from the N-terminus, the 122-residue chain is MKNRKFSNLLLLRLRILCFNKKPAFAATSYAFFFRNFSVLIFIMVPDEKENGAAADNSFSLLIGRGVVLFLFYCPTALKMHGPVPAHWFCDKNIEAIQSDGQIRLLRSGPFPWSHGTCIRGA.

The Cytoplasmic segment spans residues 1–24; it reads MKNRKFSNLLLLRLRILCFNKKPA. The helical transmembrane segment at 25–45 threads the bilayer; the sequence is FAATSYAFFFRNFSVLIFIMV. Topologically, residues 46 to 57 are extracellular; it reads PDEKENGAAADN. A helical membrane pass occupies residues 58 to 78; that stretch reads SFSLLIGRGVVLFLFYCPTAL. Residues 79–122 lie on the Cytoplasmic side of the membrane; it reads KMHGPVPAHWFCDKNIEAIQSDGQIRLLRSGPFPWSHGTCIRGA.

The protein localises to the membrane. This is an uncharacterized protein from Saccharomyces cerevisiae (strain ATCC 204508 / S288c) (Baker's yeast).